The chain runs to 756 residues: MSVVEIEEGVFESTATIDNGSFGTRTIRFETGRLARQAAGAVVAYLDDETMLLSATTASKQPKEHFDFFPLTIDVEERMYAAGRIPGSFFRREGRPSTDAILTCRLIDRPLRPTFISGLRNEIQVVVTVLSLDPKDLYDVLAINAASASTQISGIPFNGPVGGVRVALIDGQWVAFPTVEQLEKAVFDMVVAGRKVGDAGNEDVAIMMVEAEATDKVIELVAGGAGAPTEAVVAEGLEAAKPFIAALCDAQAALAGAAGKETAEYPVFPDYAEDVYYSVASVATDALSEALTIAGKEARDDRTNEIKAEVVERLAEQYAGREKEIGAAYRSLTKKLVRQRILTDHFRIDGRGVTDIRALSAEVAVIPRAHGSALFERGETQIMGVTTLDMVKMAQQIDSLGPETSKRYMHHYNFPPYSTGETGRVGSPKRREIGHGALAERALMPVLPSVEEFPYAIRQVSEALSSNGSTSMGSVCASTLSLLNAGVPLKAPVAGIAMGLVSDDVEVEGGGVERRFVTLTDILGAEDAFGDMDFKCAGTKDFVTALQLDTKLDGIPSQVLAGALAQAKDARITILEVMAEAIDEPDEMSPYAPRITTIKVPVDKIGEVIGPKGKMINSITEETGASISIEDDGTVFVGASNGEAAQAAIDKINAIANPQLPKVGERFLGTVVKTTDFGAFVSLLPGRDGLVHISKLGRGKRINKVEDVAKVGDKLRVEIADIDNRGKISLVLVAEEEAGAATPEAPAPADAATSSS.

Mg(2+) contacts are provided by aspartate 527 and aspartate 533. The region spanning 593-652 is the KH domain; sequence PRITTIKVPVDKIGEVIGPKGKMINSITEETGASISIEDDGTVFVGASNGEAAQAAIDKI. One can recognise an S1 motif domain in the interval 664-733; the sequence is GERFLGTVVK…NRGKISLVLV (70 aa).

This sequence belongs to the polyribonucleotide nucleotidyltransferase family. Requires Mg(2+) as cofactor.

The protein localises to the cytoplasm. It carries out the reaction RNA(n+1) + phosphate = RNA(n) + a ribonucleoside 5'-diphosphate. Involved in mRNA degradation. Catalyzes the phosphorolysis of single-stranded polyribonucleotides processively in the 3'- to 5'-direction. The chain is Polyribonucleotide nucleotidyltransferase from Mycolicibacterium gilvum (strain PYR-GCK) (Mycobacterium gilvum (strain PYR-GCK)).